Here is a 304-residue protein sequence, read N- to C-terminus: Acetylglutamate kinase (304 aa).

Residues 82–83, Arg-104, and Asn-197 each bind substrate; that span reads GG.

This sequence belongs to the acetylglutamate kinase family. ArgB subfamily.

It is found in the cytoplasm. The catalysed reaction is N-acetyl-L-glutamate + ATP = N-acetyl-L-glutamyl 5-phosphate + ADP. It participates in amino-acid biosynthesis; L-arginine biosynthesis; N(2)-acetyl-L-ornithine from L-glutamate: step 2/4. Functionally, catalyzes the ATP-dependent phosphorylation of N-acetyl-L-glutamate. The polypeptide is Acetylglutamate kinase (Prochlorococcus marinus (strain NATL2A)).